The following is a 305-amino-acid chain: Lipoyl synthase (305 aa).

C41, C46, C52, C68, C72, C75, and S281 together coordinate [4Fe-4S] cluster. Positions G54–K270 constitute a Radical SAM core domain. The segment covering H283–Q298 has biased composition (basic and acidic residues). The disordered stretch occupies residues H283 to S305.

It belongs to the radical SAM superfamily. Lipoyl synthase family. Requires [4Fe-4S] cluster as cofactor.

It localises to the cytoplasm. The catalysed reaction is [[Fe-S] cluster scaffold protein carrying a second [4Fe-4S](2+) cluster] + N(6)-octanoyl-L-lysyl-[protein] + 2 oxidized [2Fe-2S]-[ferredoxin] + 2 S-adenosyl-L-methionine + 4 H(+) = [[Fe-S] cluster scaffold protein] + N(6)-[(R)-dihydrolipoyl]-L-lysyl-[protein] + 4 Fe(3+) + 2 hydrogen sulfide + 2 5'-deoxyadenosine + 2 L-methionine + 2 reduced [2Fe-2S]-[ferredoxin]. The protein operates within protein modification; protein lipoylation via endogenous pathway; protein N(6)-(lipoyl)lysine from octanoyl-[acyl-carrier-protein]. Functionally, catalyzes the radical-mediated insertion of two sulfur atoms into the C-6 and C-8 positions of the octanoyl moiety bound to the lipoyl domains of lipoate-dependent enzymes, thereby converting the octanoylated domains into lipoylated derivatives. The protein is Lipoyl synthase of Staphylococcus aureus (strain bovine RF122 / ET3-1).